The chain runs to 509 residues: Putative ATP-dependent RNA helicase QP509L (509 aa).

Positions 110-262 constitute a Helicase ATP-binding domain; sequence KKLLSPYGRF…KIIIHHLGQP (153 aa). Residue 123–130 coordinates ATP; sequence LNTGLGKT. The DEAH box signature appears at 215 to 218; that stretch reads DEAH.

This sequence belongs to the DEAD box helicase family. DEAH subfamily.

It catalyses the reaction ATP + H2O = ADP + phosphate + H(+). The protein is Putative ATP-dependent RNA helicase QP509L of African swine fever virus (strain Badajoz 1971 Vero-adapted) (Ba71V).